The following is a 290-amino-acid chain: Pyridoxal 5'-phosphate synthase subunit PdxS (290 aa).

D-ribose 5-phosphate is bound at residue Asp-22. Residue Lys-79 is the Schiff-base intermediate with D-ribose 5-phosphate of the active site. Gly-151 lines the D-ribose 5-phosphate pocket. Arg-163 serves as a coordination point for D-glyceraldehyde 3-phosphate. D-ribose 5-phosphate is bound by residues Gly-212 and 233–234 (GS).

It belongs to the PdxS/SNZ family. In terms of assembly, in the presence of PdxT, forms a dodecamer of heterodimers.

It carries out the reaction aldehydo-D-ribose 5-phosphate + D-glyceraldehyde 3-phosphate + L-glutamine = pyridoxal 5'-phosphate + L-glutamate + phosphate + 3 H2O + H(+). It participates in cofactor biosynthesis; pyridoxal 5'-phosphate biosynthesis. In terms of biological role, catalyzes the formation of pyridoxal 5'-phosphate from ribose 5-phosphate (RBP), glyceraldehyde 3-phosphate (G3P) and ammonia. The ammonia is provided by the PdxT subunit. Can also use ribulose 5-phosphate and dihydroxyacetone phosphate as substrates, resulting from enzyme-catalyzed isomerization of RBP and G3P, respectively. The polypeptide is Pyridoxal 5'-phosphate synthase subunit PdxS (Clostridium botulinum (strain Langeland / NCTC 10281 / Type F)).